Reading from the N-terminus, the 779-residue chain is Acyl-CoA dehydrogenase family member 11 (779 aa).

The residue at position 175 (K175) is an N6-acetyllysine. Position 210 is a phosphoserine (S210). Y323 carries the post-translational modification Phosphotyrosine. K368 and K390 each carry N6-succinyllysine. Residues 503 to 513 (FCMTEPNVSSS), 511 to 513 (SSS), 537 to 539 (WSS), and S539 each bind FAD. S513 is a substrate binding site. Substrate is bound at residue 628–631 (GPGR). FAD-binding positions include R656, Q726, and 726–730 (QVHGG). G754 is a binding site for substrate. Residues 755–757 (PDE) and E757 each bind FAD. The residue at position 765 (K765) is an N6-acetyllysine.

The protein belongs to the acyl-CoA dehydrogenase family. Homodimer. Requires FAD as cofactor.

It is found in the peroxisome. The protein resides in the mitochondrion membrane. The enzyme catalyses a 2,3-saturated acyl-CoA + oxidized [electron-transfer flavoprotein] + H(+) = a (2E)-enoyl-CoA + reduced [electron-transfer flavoprotein]. The catalysed reaction is docosanoyl-CoA + oxidized [electron-transfer flavoprotein] + H(+) = (2E)-docosenoyl-CoA + reduced [electron-transfer flavoprotein]. It catalyses the reaction tetracosanoyl-CoA + oxidized [electron-transfer flavoprotein] + H(+) = (2E)-tetracosenoyl-CoA + reduced [electron-transfer flavoprotein]. It carries out the reaction eicosanoyl-CoA + oxidized [electron-transfer flavoprotein] + H(+) = (2E)-eicosenoyl-CoA + reduced [electron-transfer flavoprotein]. The enzyme catalyses hexacosanoyl-CoA + oxidized [electron-transfer flavoprotein] + H(+) = (2E)-hexacosenoyl-CoA + reduced [electron-transfer flavoprotein]. The catalysed reaction is tricosanoyl-CoA + oxidized [electron-transfer flavoprotein] + H(+) = (2E)-tricosenoyl-CoA + reduced [electron-transfer flavoprotein]. The protein operates within lipid metabolism; fatty acid beta-oxidation. Acyl-CoA dehydrogenase, that exhibits maximal activity towards saturated C22-CoA. Probably participates in beta-oxydation and energy production but could also play a role in the metabolism of specific fatty acids to control fatty acids composition of cellular lipids in brain. In Rattus norvegicus (Rat), this protein is Acyl-CoA dehydrogenase family member 11 (Acad11).